We begin with the raw amino-acid sequence, 630 residues long: Kelch-like protein 14 (630 aa).

The region spanning 33–153 (CDVTLTAQGQ…LYTANVTLSL (121 aa)) is the BTB domain. Residues 69 to 117 (GGGVGGQDGLGAPKDQQQQQQPQQQPPQQQQPPPQEEPGTPSSSPDDKL) are disordered. A compositionally biased stretch (low complexity) spans 84-96 (QQQQQQPQQQPPQ). The region spanning 212 to 281 (VEDVLLLNFE…PAPELVERVQ (70 aa)) is the BACK domain. Kelch repeat units lie at residues 325-374 (MLLL…EVEN), 375-426 (FLFV…RLDK), 427-473 (HLYV…VHNG), 475-520 (IYIS…VMND), 522-572 (LYAI…VLDD), and 574-622 (IYLV…TVIL).

Interacts with TOR1A. In terms of tissue distribution, expressed in the brain, primarily in neurons. In the cerebral cortex, mostly expressed in layers I and II (at protein level). Also observed in some neurons of the corpus striatum (at protein level). Expressed at high levels in the hippocampus, including in pyramidal cells of the CA1 and CA3 layers (at protein level). In the cerebellum, expression in Purkinje cells is higher than in granular cells (at protein level). Also detected in the medial septum, ventral pallidum, thalamus, hypothalamus, amygdala, inferior colliculi, locus caeruleus, peripyramidal nucleus, raphe nucleus, reticular formation, spinal trigeminal nucleus, and vestibular nuclei (at protein level). Low expression, if any, in glial cells (at protein level). Not observed in the corpus callosum.

Its subcellular location is the cytoplasm. The protein resides in the cytosol. It is found in the endoplasmic reticulum membrane. This Mus musculus (Mouse) protein is Kelch-like protein 14 (Klhl14).